The sequence spans 269 residues: 3-deoxy-manno-octulosonate cytidylyltransferase (269 aa).

This sequence belongs to the KdsB family.

The protein localises to the cytoplasm. The catalysed reaction is 3-deoxy-alpha-D-manno-oct-2-ulosonate + CTP = CMP-3-deoxy-beta-D-manno-octulosonate + diphosphate. It participates in nucleotide-sugar biosynthesis; CMP-3-deoxy-D-manno-octulosonate biosynthesis; CMP-3-deoxy-D-manno-octulosonate from 3-deoxy-D-manno-octulosonate and CTP: step 1/1. The protein operates within bacterial outer membrane biogenesis; lipopolysaccharide biosynthesis. Functionally, activates KDO (a required 8-carbon sugar) for incorporation into bacterial lipopolysaccharide in Gram-negative bacteria. The chain is 3-deoxy-manno-octulosonate cytidylyltransferase from Cupriavidus pinatubonensis (strain JMP 134 / LMG 1197) (Cupriavidus necator (strain JMP 134)).